Consider the following 921-residue polypeptide: Translation initiation factor IF-2 (921 aa).

The interval 1–296 is disordered; sequence MADQNTPGDK…PGPQKQRGRL (296 aa). Residues 80–89 show a composition bias toward low complexity; the sequence is RPSGPRPSGG. The span at 117–183 shows a compositional bias: basic and acidic residues; sequence ARVRDLEERR…AKKRFGEGEA (67 aa). 2 stretches are compositionally biased toward low complexity: residues 184–237 and 248–257; these read PRPA…ARPA and GRAPAAVAAG. The tr-type G domain occupies 417–586; the sequence is PRSPVVTVMG…MIALQADILD (170 aa). Residues 426–433 are G1; that stretch reads GHVDHGKT. 426-433 is a GTP binding site; it reads GHVDHGKT. Residues 451-455 form a G2 region; that stretch reads GITQH. Residues 474–477 form a G3 region; the sequence is DTPG. GTP-binding positions include 474–478 and 528–531; these read DTPGH and NKID. A G4 region spans residues 528 to 531; the sequence is NKID. A G5 region spans residues 564 to 566; it reads SAK.

The protein belongs to the TRAFAC class translation factor GTPase superfamily. Classic translation factor GTPase family. IF-2 subfamily.

The protein localises to the cytoplasm. In terms of biological role, one of the essential components for the initiation of protein synthesis. Protects formylmethionyl-tRNA from spontaneous hydrolysis and promotes its binding to the 30S ribosomal subunits. Also involved in the hydrolysis of GTP during the formation of the 70S ribosomal complex. The sequence is that of Translation initiation factor IF-2 from Bradyrhizobium sp. (strain ORS 278).